The chain runs to 874 residues: MANNTTSALHPRGSGQRCVYDTVLRFGDPDARRRGFQLDEVSHNKLCDIFDSGPLHFAFGDLKVMKVAGGVVTPHKTVVKTVYVSGVQEGNDYVTFAFTPGPNEWREVDPRIDKRTALVGVLVQEHKKLDSDLKESRRELSQLKLEHSLLRHDYERLVREKPGPAMRTFKFSAVIFYAFFLGFLLMSAVKGEVYGRCLDSELNLNGNPEVCLHWEEVKSFSLQVALADFWNMTLDYYATVAPQSPLMDLALGYFPYFANWHMAAFLVGTAHVVAAERPLYMLVTLVLATLSRFQLVALAAVPMLDMPSSIGLWVTMVLFAIDQAFAILASVLISVLLLILCLAMNDVDYGALLRGCVTLVSATVFSHLVSFLHAPGWFTIIAILIYRIPKVLSYVSAERVDIKGPDGKIKETQNANPSWITKMSGLKNFFQRAFRQKVRTGVNPTTRIIPNSLVVIDAKDGRGTGFRVRNYLVTAGHVVGADTTVRVRWADVTSFAHVVYRVPNKDIVLLTLPAEYNSLHSYKLAKEVVDGTVVVVSNGDGGALSVGISEGVIVGESMTYAINTADGMSGSPLTTTDGRLIGVHQQNTGFTGGAVIFRDTDFPQPKKPQREADLEAKVAELEKALAAYTQSATGEDIVGLVRVAIQREMEVLRKELSNEFGQAKGKTKHKRRIMAAARSGGKRKPGKVWTEEEYKKLLEEGFTRDQLREMAEAAREADDDFDDYEEEKNEVDYPVWSDHDSDEEIDRDWFGQNLPTWSSAWSDFEPELDPDVTKTLPCHLEDKFSLKHYIITEADLKHFGQEMKEYMDHLDAVIKTHTEKGKWCPNTNTEEILKDLNAMWFKLNHTMWKNGVAPFMQRKKQKPKNGKRAPKGAQ.

The next 4 helical transmembrane spans lie at L249–T269, L279–A299, A324–M344, and F365–I385. Residues H477, D506, and S569 each act as charge relay system; for serine protease activity in the active site. Y694 is subject to O-(5'-phospho-RNA)-tyrosine. Positions F855–Q874 are disordered. The span at Q857–Q874 shows a compositional bias: basic residues.

The protein belongs to the astroviridae polyprotein 1A family. In terms of assembly, monomer. Cleaved by the viral and host proteases. The protease is probably autocatalytically cleaved.

It is found in the host membrane. The enzyme catalyses RNA(n) + a ribonucleoside 5'-triphosphate = RNA(n+1) + diphosphate. Functionally, responsible for the cleavage of the polyprotein into functional products. In terms of biological role, protein covalently attached to the 5' extremity of the genomic and subgenomic RNAs. It may serve as a primer for the replicase. This Mink astrovirus 1 (MAstV-1) protein is Non-structural polyprotein 1A (ORF1).